A 129-amino-acid polypeptide reads, in one-letter code: Glycine cleavage system H protein (129 aa).

The Lipoyl-binding domain occupies 24-106; that stretch reads VFTVGISEHA…YGDGWLFKIK (83 aa). Position 65 is an N6-lipoyllysine (lysine 65).

The protein belongs to the GcvH family. In terms of assembly, the glycine cleavage system is composed of four proteins: P, T, L and H. The cofactor is (R)-lipoate.

The glycine cleavage system catalyzes the degradation of glycine. The H protein shuttles the methylamine group of glycine from the P protein to the T protein. The sequence is that of Glycine cleavage system H protein from Alteromonas mediterranea (strain DSM 17117 / CIP 110805 / LMG 28347 / Deep ecotype).